The following is a 424-amino-acid chain: Glutamyl-tRNA reductase (424 aa).

Residues 49-52 (TCNR), S107, 112-114 (EPQ), and Q118 each bind substrate. The Nucleophile role is filled by C50. Position 187–192 (187–192 (GAGETI)) interacts with NADP(+).

It belongs to the glutamyl-tRNA reductase family. Homodimer.

The enzyme catalyses (S)-4-amino-5-oxopentanoate + tRNA(Glu) + NADP(+) = L-glutamyl-tRNA(Glu) + NADPH + H(+). It participates in porphyrin-containing compound metabolism; protoporphyrin-IX biosynthesis; 5-aminolevulinate from L-glutamyl-tRNA(Glu): step 1/2. In terms of biological role, catalyzes the NADPH-dependent reduction of glutamyl-tRNA(Glu) to glutamate 1-semialdehyde (GSA). In Pseudomonas fluorescens (strain ATCC BAA-477 / NRRL B-23932 / Pf-5), this protein is Glutamyl-tRNA reductase.